The primary structure comprises 316 residues: Acetyl-coenzyme A carboxylase carboxyl transferase subunit alpha (316 aa).

The CoA carboxyltransferase C-terminal domain maps to 24 to 291 (NIKDKADIVD…KEALIQQLNE (268 aa)).

The protein belongs to the AccA family. As to quaternary structure, acetyl-CoA carboxylase is a heterohexamer composed of biotin carboxyl carrier protein (AccB), biotin carboxylase (AccC) and two subunits each of ACCase subunit alpha (AccA) and ACCase subunit beta (AccD).

It is found in the cytoplasm. The enzyme catalyses N(6)-carboxybiotinyl-L-lysyl-[protein] + acetyl-CoA = N(6)-biotinyl-L-lysyl-[protein] + malonyl-CoA. Its pathway is lipid metabolism; malonyl-CoA biosynthesis; malonyl-CoA from acetyl-CoA: step 1/1. Its function is as follows. Component of the acetyl coenzyme A carboxylase (ACC) complex. First, biotin carboxylase catalyzes the carboxylation of biotin on its carrier protein (BCCP) and then the CO(2) group is transferred by the carboxyltransferase to acetyl-CoA to form malonyl-CoA. This chain is Acetyl-coenzyme A carboxylase carboxyl transferase subunit alpha, found in Ruthia magnifica subsp. Calyptogena magnifica.